We begin with the raw amino-acid sequence, 448 residues long: Trigger factor (448 aa).

Residues 167 to 253 (GSIVRVDFVE…IKDIKKRDIP (87 aa)) enclose the PPIase FKBP-type domain.

Belongs to the FKBP-type PPIase family. Tig subfamily.

The protein localises to the cytoplasm. It catalyses the reaction [protein]-peptidylproline (omega=180) = [protein]-peptidylproline (omega=0). In terms of biological role, involved in protein export. Acts as a chaperone by maintaining the newly synthesized protein in an open conformation. Functions as a peptidyl-prolyl cis-trans isomerase. The polypeptide is Trigger factor (Borrelia hermsii (strain HS1 / DAH)).